Here is a 443-residue protein sequence, read N- to C-terminus: Xaa-Pro dipeptidase (443 aa).

5 residues coordinate Mn(2+): D248, D259, H339, E384, and E423.

Belongs to the peptidase M24B family. Bacterial-type prolidase subfamily. It depends on Mn(2+) as a cofactor.

The enzyme catalyses Xaa-L-Pro dipeptide + H2O = an L-alpha-amino acid + L-proline. Its function is as follows. Splits dipeptides with a prolyl residue in the C-terminal position. This is Xaa-Pro dipeptidase from Colwellia psychrerythraea (strain 34H / ATCC BAA-681) (Vibrio psychroerythus).